Consider the following 626-residue polypeptide: E3 ubiquitin-protein ligase CHFR (626 aa).

The FHA domain occupies 34-85 (WTIGRKKACDLSFPGNKLVSGEHCKITVNEESGSVSLEDTSTNGTVINKLKV). Composition is skewed to polar residues over residues 123-133 (EDSMQNPADTS) and 140-149 (TQTLSSQDDQ). Disordered stretches follow at residues 123 to 170 (EDSM…TPTT) and 188 to 229 (PGVQ…MRTE). The segment covering 158-170 (STSTSSLFSTPTT) has biased composition (low complexity). Over residues 194–203 (SGEKSGESLE) the composition is skewed to basic and acidic residues. The RING-type zinc-finger motif lies at 267-306 (CIICQELLHDCVSLQPCMHTFCAACYSGWMERSSLCPTCR). Disordered stretches follow at residues 351–387 (DMLQPKVRRSFSDEEGSSEDLLELSDVDSESSDISQP) and 402–428 (IQPPPYPPPSDTEASRTQGDAPSTSTN). Residues 363–381 (DEEGSSEDLLELSDVDSES) show a composition bias toward acidic residues. Over residues 416 to 428 (SRTQGDAPSTSTN) the composition is skewed to polar residues. The PBZ-type zinc finger occupies 595-617 (PNCYWGRNCRTQVKAHHAMKFNH).

Belongs to the CHFR family.

Its subcellular location is the nucleus. It is found in the PML body. The catalysed reaction is S-ubiquitinyl-[E2 ubiquitin-conjugating enzyme]-L-cysteine + [acceptor protein]-L-lysine = [E2 ubiquitin-conjugating enzyme]-L-cysteine + N(6)-ubiquitinyl-[acceptor protein]-L-lysine.. Its pathway is protein modification; protein ubiquitination. Functionally, E3 ubiquitin-protein ligase that functions in the antephase checkpoint by actively delaying passage into mitosis in response to microtubule poisons. Acts in early prophase before chromosome condensation, when the centrosome move apart from each other along the periphery of the nucleus. Probably involved in signaling the presence of mitotic stress caused by microtubule poisons by mediating the 'Lys-48'-linked ubiquitination of target proteins, leading to their degradation by the proteasome. May also promote the formation of 'Lys-63'-linked polyubiquitin chains and functions with the specific ubiquitin-conjugating ubc13-mms2 (ube2n-ube2v2) heterodimer. Substrates that are polyubiquitinated at 'Lys-63' are usually not targeted for degradation, but are rather involved in signaling cellular stress. This Xenopus tropicalis (Western clawed frog) protein is E3 ubiquitin-protein ligase CHFR (chfr).